The following is a 672-amino-acid chain: DNA-directed RNA polymerase subunit gamma (672 aa).

Cys-70, Cys-72, Cys-85, and Cys-88 together coordinate Zn(2+). Asp-466, Asp-468, and Asp-470 together coordinate Mg(2+).

This sequence belongs to the RNA polymerase beta' chain family. RpoC1 subfamily. In cyanobacteria the RNAP catalytic core is composed of 2 alpha, 1 beta, 1 beta', 1 gamma and 1 omega subunit. When a sigma factor is associated with the core the holoenzyme is formed, which can initiate transcription. Requires Mg(2+) as cofactor. Zn(2+) is required as a cofactor.

It carries out the reaction RNA(n) + a ribonucleoside 5'-triphosphate = RNA(n+1) + diphosphate. In terms of biological role, DNA-dependent RNA polymerase catalyzes the transcription of DNA into RNA using the four ribonucleoside triphosphates as substrates. In Trichodesmium erythraeum (strain IMS101), this protein is DNA-directed RNA polymerase subunit gamma.